The primary structure comprises 373 residues: COP9 signalosome complex subunit 5 (373 aa).

The MPN domain maps to Cys66 to Lys201. Residues His147, His149, and Asp160 each coordinate Zn(2+). The JAMM motif motif lies at His147–Asp160. Positions Phe289 to Ile325 are disordered. Residues Asn295 to Arg306 show a composition bias toward low complexity.

It belongs to the peptidase M67A family. CSN5 subfamily. As to quaternary structure, component of the COP9 signalosome (CSN) complex.

The protein localises to the cytoplasm. It is found in the nucleus. Its function is as follows. Catalytic Component of the COP9 signalosome (CSN) complex that acts as an regulator of the ubiquitin (Ubl) conjugation pathway by mediating the deneddylation of the cullin subunit of SCF-type E3 ubiquitin-protein ligase complexes. The CNS complex is involved in the regulation of the mating pheromone response. The chain is COP9 signalosome complex subunit 5 (RRI1) from Kluyveromyces lactis (strain ATCC 8585 / CBS 2359 / DSM 70799 / NBRC 1267 / NRRL Y-1140 / WM37) (Yeast).